The sequence spans 153 residues: Glucose-6-phosphate 1-dehydrogenase (153 aa).

R21 and K120 together coordinate NADP(+). K120 provides a ligand contact to D-glucose 6-phosphate.

The protein belongs to the glucose-6-phosphate dehydrogenase family.

Its subcellular location is the cytoplasm. The protein resides in the cytosol. The catalysed reaction is D-glucose 6-phosphate + NADP(+) = 6-phospho-D-glucono-1,5-lactone + NADPH + H(+). The protein operates within carbohydrate degradation; pentose phosphate pathway; D-ribulose 5-phosphate from D-glucose 6-phosphate (oxidative stage): step 1/3. In terms of biological role, cytosolic glucose-6-phosphate dehydrogenase that catalyzes the first and rate-limiting step of the oxidative branch within the pentose phosphate pathway/shunt, an alternative route to glycolysis for the dissimilation of carbohydrates and a major source of reducing power and metabolic intermediates for fatty acid and nucleic acid biosynthetic processes. The protein is Glucose-6-phosphate 1-dehydrogenase (ZW) of Hyalophora cecropia (Cecropia moth).